Here is a 495-residue protein sequence, read N- to C-terminus: ATP synthase subunit alpha, chloroplastic (495 aa).

170–177 (GDRQTGKT) provides a ligand contact to ATP.

This sequence belongs to the ATPase alpha/beta chains family. As to quaternary structure, F-type ATPases have 2 components, CF(1) - the catalytic core - and CF(0) - the membrane proton channel. CF(1) has five subunits: alpha(3), beta(3), gamma(1), delta(1), epsilon(1). CF(0) has four main subunits: a, b, b' and c.

It localises to the plastid. It is found in the chloroplast thylakoid membrane. It carries out the reaction ATP + H2O + 4 H(+)(in) = ADP + phosphate + 5 H(+)(out). Functionally, produces ATP from ADP in the presence of a proton gradient across the membrane. The alpha chain is a regulatory subunit. In Cyanidioschyzon merolae (strain NIES-3377 / 10D) (Unicellular red alga), this protein is ATP synthase subunit alpha, chloroplastic.